Here is a 277-residue protein sequence, read N- to C-terminus: Cis-3,4-dihydrophenanthrene-3,4-diol dehydrogenase (277 aa).

NAD(+)-binding positions include 10 to 37 (FLTGGVAGLGRALVKRLVEEGANVTVLD) and Asp-60. Ser-143 is a substrate binding site. The active-site Proton acceptor is Tyr-156. Lys-160 lines the NAD(+) pocket.

The protein belongs to the short-chain dehydrogenases/reductases (SDR) family. As to quaternary structure, homotetramer.

The catalysed reaction is (3S,4R)-3,4-dihydrophenanthrene-3,4-diol + NAD(+) = phenanthrene-3,4-diol + NADH + H(+). Its activity is regulated as follows. Inhibited by heavy metal such as Hg(2+) and by p-chloromercuribenzoate. Functionally, involved in the degradation of phenanthrene. Catalyzes the oxidation of cis-phenanthrene dihydrodiol (PDD) to yield phenanthrenediol. It can use either NAD or NADP as electron acceptor, however NAD is preferred to NADP. The chain is Cis-3,4-dihydrophenanthrene-3,4-diol dehydrogenase (phnB) from Alcaligenes faecalis.